The following is a 307-amino-acid chain: Ribosomal protein uL3 glutamine methyltransferase (307 aa).

The protein belongs to the protein N5-glutamine methyltransferase family. PrmB subfamily.

It carries out the reaction L-glutaminyl-[ribosomal protein uL3] + S-adenosyl-L-methionine = N(5)-methyl-L-glutaminyl-[ribosomal protein uL3] + S-adenosyl-L-homocysteine + H(+). In terms of biological role, methylates large ribosomal subunit protein uL3 on a specific glutamine residue. The sequence is that of Ribosomal protein uL3 glutamine methyltransferase from Burkholderia pseudomallei (strain K96243).